The chain runs to 352 residues: MSASTTATLRHDWTLAEVRALFVQPFNDLLFQAQTLHRAHFDANRVQVSTLLSIKTGACPEDCKYCPQSGHYNTGLEKEKLLEVQKVLEEAARAKSIGSTRFCMGAAWKHPSAKDMPYVLEMVKGVKAMGLETCMTLGRLDQEQTEALATAGLDYYNHNLDTSPEFYGSIITTRTYGERLQTLAYVRDAGMKICSGGILGMGESLDDRAGLLIQLANLPEHPESVPINMLVKVAGTPLENAEDVDPFDFIRMLAVARILMPQSHVRLSAGREAMNEQMQALAFFAGANSIFYGDKLLTTANPQADKDMLLFSRLGIKPEAGEGHADEVHQAAIEQALVEQQSSAMFYDAASA.

The Radical SAM core domain occupies 44-262; sequence NRVQVSTLLS…LAVARILMPQ (219 aa). 3 residues coordinate [4Fe-4S] cluster: Cys59, Cys63, and Cys66. Residues Cys103, Cys134, Cys194, and Arg266 each coordinate [2Fe-2S] cluster.

The protein belongs to the radical SAM superfamily. Biotin synthase family. Homodimer. [4Fe-4S] cluster serves as cofactor. [2Fe-2S] cluster is required as a cofactor.

The enzyme catalyses (4R,5S)-dethiobiotin + (sulfur carrier)-SH + 2 reduced [2Fe-2S]-[ferredoxin] + 2 S-adenosyl-L-methionine = (sulfur carrier)-H + biotin + 2 5'-deoxyadenosine + 2 L-methionine + 2 oxidized [2Fe-2S]-[ferredoxin]. The protein operates within cofactor biosynthesis; biotin biosynthesis; biotin from 7,8-diaminononanoate: step 2/2. In terms of biological role, catalyzes the conversion of dethiobiotin (DTB) to biotin by the insertion of a sulfur atom into dethiobiotin via a radical-based mechanism. In Pseudomonas syringae pv. tomato (strain ATCC BAA-871 / DC3000), this protein is Biotin synthase.